The chain runs to 82 residues: Large ribosomal subunit protein bL27 (82 aa).

The tract at residues 1-26 (MAHKKGQGASRNGRDSESKRLGMKVG) is disordered.

The protein belongs to the bacterial ribosomal protein bL27 family.

In Chlamydia felis (strain Fe/C-56) (Chlamydophila felis), this protein is Large ribosomal subunit protein bL27.